We begin with the raw amino-acid sequence, 508 residues long: Maturase K (508 aa).

It belongs to the intron maturase 2 family. MatK subfamily.

It localises to the plastid. The protein localises to the chloroplast. In terms of biological role, usually encoded in the trnK tRNA gene intron. Probably assists in splicing its own and other chloroplast group II introns. This chain is Maturase K, found in Abrus precatorius (Indian licorice).